A 267-amino-acid polypeptide reads, in one-letter code: Phosphate import ATP-binding protein PstB 2 (267 aa).

In terms of domain architecture, ABC transporter spans 21–262 (LTTKDLHVYY…AKCQSTSDYV (242 aa)). ATP is bound at residue 53–60 (GPSGCGKS).

Belongs to the ABC transporter superfamily. Phosphate importer (TC 3.A.1.7) family. The complex is composed of two ATP-binding proteins (PstB), two transmembrane proteins (PstC and PstA) and a solute-binding protein (PstS).

It localises to the cell membrane. It catalyses the reaction phosphate(out) + ATP + H2O = ADP + 2 phosphate(in) + H(+). In terms of biological role, part of the ABC transporter complex PstSACB involved in phosphate import. Responsible for energy coupling to the transport system. This Streptococcus agalactiae serotype Ia (strain ATCC 27591 / A909 / CDC SS700) protein is Phosphate import ATP-binding protein PstB 2.